We begin with the raw amino-acid sequence, 1040 residues long: Multidrug resistance protein MdtB (1040 aa).

Transmembrane regions (helical) follow at residues 16–36 (FIMRPVATTLLMVAILLAGII), 342–362 (DTQFELMLAIALVVMIIYLFL), 369–389 (IIPGVAVPLSLVGTFAVMVFL), 396–416 (LTLMALTIATGFVVDDAIVVI), 440–460 (IGFTIISLTFSLIAVLIPLLF), 472–492 (FAVTLAVAILISAVVSLTLTP), 537–557 (WLTLGVALSTLALSIILWVFI), 863–883 (LGSTVWLVVAAVVAMYIVLGV), 888–908 (FIHPITILSTLPTAGVGALLA), 911–931 (LAGSELDVIAIIGIILLIGIV), 968–988 (ILMTTLAALLGALPLMLSTGV), and 998–1018 (IGMVGGLMLSQVLTLFTTPVI).

This sequence belongs to the resistance-nodulation-cell division (RND) (TC 2.A.6) family. MdtB subfamily. As to quaternary structure, part of a tripartite efflux system composed of MdtA, MdtB and MdtC. MdtB forms a heteromultimer with MdtC.

Its subcellular location is the cell inner membrane. The protein is Multidrug resistance protein MdtB of Klebsiella pneumoniae subsp. pneumoniae (strain ATCC 700721 / MGH 78578).